We begin with the raw amino-acid sequence, 189 residues long: Ras-like protein 1 (189 aa).

10–17 serves as a coordination point for GTP; the sequence is GAGGVGKS. The short motif at 32–40 is the Effector region element; it reads YDPTIEDSY. GTP is bound by residues 57-61 and 116-119; these read DTAGQ and NKCD. Residue Cys-186 is modified to Cysteine methyl ester. Cys-186 carries the S-geranylgeranyl cysteine lipid modification. The propeptide at 187–189 is removed in mature form; it reads KIL.

This sequence belongs to the small GTPase superfamily. Ras family.

It is found in the cell membrane. The catalysed reaction is GTP + H2O = GDP + phosphate + H(+). Alternates between an inactive form bound to GDP and an active form bound to GTP. Activated by a guanine nucleotide-exchange factor (GEF) and inactivated by a GTPase-activating protein (GAP). In terms of biological role, ras proteins bind GDP/GTP and possess intrinsic GTPase activity. Plays a role in eye development by regulating cell growth, survival of postmitotic ommatidial cells and differentiation of photoreceptor cells. During larval development, mediates Ptth/tor signaling leading to the production of ecdysone, a hormone required for the initiation of metamorphosis. The protein is Ras-like protein 1 of Drosophila persimilis (Fruit fly).